The primary structure comprises 122 residues: Heat-labile enterotoxin IIB, B chain (122 aa).

Residues 1–23 (MSFKKIIKAFVIMAALVSVQAHA) form the signal peptide. An intrachain disulfide couples cysteine 33 to cysteine 104.

In terms of assembly, heterohexamer of one A chain and of five B chains.

In terms of biological role, the biological activity of the toxin is produced by the A chain, which activates intracellular adenyl cyclase. This Escherichia coli protein is Heat-labile enterotoxin IIB, B chain.